The following is a 129-amino-acid chain: Large ribosomal subunit protein bL20 (129 aa).

The protein belongs to the bacterial ribosomal protein bL20 family.

In terms of biological role, binds directly to 23S ribosomal RNA and is necessary for the in vitro assembly process of the 50S ribosomal subunit. It is not involved in the protein synthesizing functions of that subunit. This Mycobacteroides abscessus (strain ATCC 19977 / DSM 44196 / CCUG 20993 / CIP 104536 / JCM 13569 / NCTC 13031 / TMC 1543 / L948) (Mycobacterium abscessus) protein is Large ribosomal subunit protein bL20.